The primary structure comprises 121 residues: Large ribosomal subunit protein bL12 (121 aa).

Belongs to the bacterial ribosomal protein bL12 family. As to quaternary structure, homodimer. Part of the ribosomal stalk of the 50S ribosomal subunit. Forms a multimeric L10(L12)X complex, where L10 forms an elongated spine to which 2 to 4 L12 dimers bind in a sequential fashion. Binds GTP-bound translation factors.

Its function is as follows. Forms part of the ribosomal stalk which helps the ribosome interact with GTP-bound translation factors. Is thus essential for accurate translation. In Klebsiella pneumoniae (strain 342), this protein is Large ribosomal subunit protein bL12.